A 212-amino-acid chain; its full sequence is Large ribosomal subunit protein uL3 (212 aa).

Residue Gln-153 is modified to N5-methylglutamine.

The protein belongs to the universal ribosomal protein uL3 family. Part of the 50S ribosomal subunit. Forms a cluster with proteins L14 and L19. Methylated by PrmB.

One of the primary rRNA binding proteins, it binds directly near the 3'-end of the 23S rRNA, where it nucleates assembly of the 50S subunit. The chain is Large ribosomal subunit protein uL3 from Shewanella woodyi (strain ATCC 51908 / MS32).